The following is a 161-amino-acid chain: Peptidyl-prolyl cis-trans isomerase-like 1 (161 aa).

Positions 1 to 155 (MATDVAFDTS…DEVKIIRARV (155 aa)) constitute a PPIase cyclophilin-type domain.

Belongs to the cyclophilin-type PPIase family. PPIL1 subfamily.

The enzyme catalyses [protein]-peptidylproline (omega=180) = [protein]-peptidylproline (omega=0). Functionally, PPIases accelerate the folding of proteins. It catalyzes the cis-trans isomerization of proline imidic peptide bonds in oligopeptides. The chain is Peptidyl-prolyl cis-trans isomerase-like 1 (cyp1) from Aspergillus oryzae (strain ATCC 42149 / RIB 40) (Yellow koji mold).